A 504-amino-acid polypeptide reads, in one-letter code: Anaerobic nitric oxide reductase transcription regulator NorR (504 aa).

Position 57 is a 4-aspartylphosphate (Asp-57). The 230-residue stretch at 187-416 (MIGLSPGMTQ…LEHAIHRAVV (230 aa)) folds into the Sigma-54 factor interaction domain. ATP is bound by residues 215–222 (GETGTGKE) and 278–287 (ADNGTLFLDE). Positions 479 to 498 (WAACARMLETDVANLHRLAK) form a DNA-binding region, H-T-H motif.

It functions in the pathway nitrogen metabolism; nitric oxide reduction. In terms of biological role, required for the expression of anaerobic nitric oxide (NO) reductase, acts as a transcriptional activator for at least the norVW operon. Activation also requires sigma-54. The sequence is that of Anaerobic nitric oxide reductase transcription regulator NorR from Shigella boydii serotype 4 (strain Sb227).